The primary structure comprises 434 residues: Nicotinate phosphoribosyltransferase (434 aa).

At His242 the chain carries Phosphohistidine; by autocatalysis.

Belongs to the NAPRTase family. In terms of processing, transiently phosphorylated on a His residue during the reaction cycle. Phosphorylation strongly increases the affinity for substrates and increases the rate of nicotinate D-ribonucleotide production. Dephosphorylation regenerates the low-affinity form of the enzyme, leading to product release.

It carries out the reaction nicotinate + 5-phospho-alpha-D-ribose 1-diphosphate + ATP + H2O = nicotinate beta-D-ribonucleotide + ADP + phosphate + diphosphate. The protein operates within cofactor biosynthesis; NAD(+) biosynthesis; nicotinate D-ribonucleotide from nicotinate: step 1/1. In terms of biological role, catalyzes the synthesis of beta-nicotinate D-ribonucleotide from nicotinate and 5-phospho-D-ribose 1-phosphate at the expense of ATP. The sequence is that of Nicotinate phosphoribosyltransferase from Brucella melitensis biotype 1 (strain ATCC 23456 / CCUG 17765 / NCTC 10094 / 16M).